The chain runs to 38 residues: Toxin CSTX-16 (38 aa).

Glutamine 19 and glutamine 38 each carry glutamine amide.

This sequence belongs to the cationic peptide 04 (cupiennin) family. 10 (double chain) subfamily. In terms of tissue distribution, expressed by the venom gland.

Its subcellular location is the secreted. The protein is Toxin CSTX-16 of Cupiennius salei (American wandering spider).